The primary structure comprises 95 residues: Small ribosomal subunit protein uS19 (95 aa).

The protein belongs to the universal ribosomal protein uS19 family.

In terms of biological role, protein S19 forms a complex with S13 that binds strongly to the 16S ribosomal RNA. In Roseiflexus castenholzii (strain DSM 13941 / HLO8), this protein is Small ribosomal subunit protein uS19.